We begin with the raw amino-acid sequence, 158 residues long: Putative 8-oxo-dGTP diphosphatase YtkD (158 aa).

Residues 6–145 (DYYQNTVQLS…SFIMKDSVLP (140 aa)) enclose the Nudix hydrolase domain. The Nudix box motif lies at 53–74 (GKVEPMECAEEAALREVKEETG). Mg(2+) contacts are provided by glutamate 68 and glutamate 72.

Belongs to the Nudix hydrolase family. Mg(2+) is required as a cofactor.

It catalyses the reaction 8-oxo-dGTP + H2O = 8-oxo-dGMP + diphosphate + H(+). Its activity is regulated as follows. Not induced by oxidative damage (following treatment with paraquat or hydrogen peroxide). Not induced by mitomycin C. Not induced by sigma-B general stress inducers such as sodium chloride, ethanol or heat. Its function is as follows. Involved in the GO system responsible for removing an oxidatively damaged form of guanine (7,8-dihydro-8-oxoguanine, 8-oxo-dGTP) from DNA and the nucleotide pool. 8-oxo-dGTP is inserted opposite dA and dC residues of template DNA with almost equal efficiency thus leading to A.T to G.C transversions. Functions, in conjunction with MutT, to protect vegetatively growing cells from DNA-damaging agents such as H(2)O(2) or t-BHP (t-butylhydroperoxide). The 2 proteins do not however protect spores. According to PubMed:15576788, phosphohydrolase that catalyzes the hydrolysis of all common nucleoside triphosphates as well as of the mutagenic analog 8-oxo-dGTP. The high catalytic efficiency on dGTP is in contrast to results from PubMed:14761999. According to PubMed:14761999, catalyzes the hydrolysis of 8-oxo-dGTP with a specific activity 413 times higher than that exhibited against dGTP. Preferentially catalyzes the hydrolysis of 8-oxo-dGTP and 8-oxo-GTP. According to PubMed:15576788, hydrolyzes nucleoside triphosphates in a stepwise fashion through the diphosphate to the monophosphate, releasing two molecules of inorganic orthophosphate. The protein is Putative 8-oxo-dGTP diphosphatase YtkD (ytkD) of Bacillus subtilis (strain 168).